Consider the following 712-residue polypeptide: Rap1 GTPase-activating protein 2 (712 aa).

Residues Met-1 to Pro-33 are disordered. Ser-26 is subject to Phosphoserine. Residue Thr-30 is modified to Phosphothreonine. The Rap-GAP domain occupies Ile-229–Leu-445. A phosphoserine mark is found at Ser-488, Ser-495, Ser-525, Ser-539, Ser-545, Ser-593, and Ser-594. The tract at residues Ala-529–His-712 is disordered. The segment covering Asp-566–Ser-594 has biased composition (polar residues). Over residues Pro-599–Gly-612 the composition is skewed to basic and acidic residues. The span at Ser-617–Thr-629 shows a compositional bias: low complexity. The segment covering Ser-641–Phe-652 has biased composition (polar residues). Residues Ser-660–Ser-669 are compositionally biased toward low complexity. The span at Arg-681–Ser-694 shows a compositional bias: polar residues.

The protein localises to the cytoplasm. Functionally, GTPase activator for the nuclear Ras-related regulatory protein RAP-1A (KREV-1), converting it to the putatively inactive GDP-bound state. The chain is Rap1 GTPase-activating protein 2 (Rap1gap2) from Mus musculus (Mouse).